Consider the following 432-residue polypeptide: Glutamate-1-semialdehyde 2,1-aminomutase 2 (432 aa).

Position 268 is an N6-(pyridoxal phosphate)lysine (Lys-268).

It belongs to the class-III pyridoxal-phosphate-dependent aminotransferase family. HemL subfamily. As to quaternary structure, homodimer. Pyridoxal 5'-phosphate is required as a cofactor.

It localises to the cytoplasm. It carries out the reaction (S)-4-amino-5-oxopentanoate = 5-aminolevulinate. It functions in the pathway porphyrin-containing compound metabolism; protoporphyrin-IX biosynthesis; 5-aminolevulinate from L-glutamyl-tRNA(Glu): step 2/2. This Listeria welshimeri serovar 6b (strain ATCC 35897 / DSM 20650 / CCUG 15529 / CIP 8149 / NCTC 11857 / SLCC 5334 / V8) protein is Glutamate-1-semialdehyde 2,1-aminomutase 2.